Consider the following 145-residue polypeptide: Protein SprT-like (145 aa).

The SprT-like domain maps to 5-141 (DYVREVSLAD…CGRCHGRLIK (137 aa)). H64 contributes to the Zn(2+) binding site. Residue E65 is part of the active site. H68 contributes to the Zn(2+) binding site.

This sequence belongs to the SprT family. It depends on Zn(2+) as a cofactor.

Its subcellular location is the cytoplasm. The sequence is that of Protein SprT-like from Streptococcus equi subsp. zooepidemicus (strain H70).